Reading from the N-terminus, the 347-residue chain is CD5 antigen-like (347 aa).

An N-terminal signal peptide occupies residues 1 to 19 (MALLFSLILAICTRPGFLA). SRCR domains are found at residues 24–125 (VRLV…ASCE), 138–239 (VRLA…VECE), and 244–346 (LRLV…VICS). Intrachain disulfides connect C33/C67, C49/C114, C62/C124, C96/C106, C163/C228, C176/C238, C208/C218, C253/C287, C269/C335, C282/C345, and C315/C325.

In terms of assembly, interacts with FASN; the interaction is direct. Interacts (via SRCR2 and SRCR3) with pentameric IgM (via Fc region); disulfide-linked. Post-translationally, not N-glycosylated. Probably not O-glycosylated. Expressed in spleen, lymph node, thymus, bone marrow, and fetal liver, but not in non-lymphoid tissues.

The protein resides in the secreted. It is found in the cytoplasm. Secreted protein that acts as a key regulator of lipid synthesis: mainly expressed by macrophages in lymphoid and inflamed tissues and regulates mechanisms in inflammatory responses, such as infection or atherosclerosis. Able to inhibit lipid droplet size in adipocytes. Following incorporation into mature adipocytes via CD36-mediated endocytosis, associates with cytosolic FASN, inhibiting fatty acid synthase activity and leading to lipolysis, the degradation of triacylglycerols into glycerol and free fatty acids (FFA). CD5L-induced lipolysis occurs with progression of obesity: participates in obesity-associated inflammation following recruitment of inflammatory macrophages into adipose tissues, a cause of insulin resistance and obesity-related metabolic disease. Regulation of intracellular lipids mediated by CD5L has a direct effect on transcription regulation mediated by nuclear receptors ROR-gamma (RORC). Acts as a key regulator of metabolic switch in T-helper Th17 cells. Regulates the expression of pro-inflammatory genes in Th17 cells by altering the lipid content and limiting synthesis of cholesterol ligand of RORC, the master transcription factor of Th17-cell differentiation. CD5L is mainly present in non-pathogenic Th17 cells, where it decreases the content of polyunsaturated fatty acyls (PUFA), affecting two metabolic proteins MSMO1 and CYP51A1, which synthesize ligands of RORC, limiting RORC activity and expression of pro-inflammatory genes. Participates in obesity-associated autoimmunity via its association with IgM, interfering with the binding of IgM to Fcalpha/mu receptor and enhancing the development of long-lived plasma cells that produce high-affinity IgG autoantibodies. Also acts as an inhibitor of apoptosis in macrophages: promotes macrophage survival from the apoptotic effects of oxidized lipids in case of atherosclerosis. Involved in early response to microbial infection against various pathogens by acting as a pattern recognition receptor and by promoting autophagy. The chain is CD5 antigen-like (CD5L) from Homo sapiens (Human).